Consider the following 227-residue polypeptide: Cytochrome c oxidase subunit 2 (227 aa).

At 1 to 14 (MAYTFQLGLQDATS) the chain is on the mitochondrial intermembrane side. The helical transmembrane segment at 15–45 (PIMEELTNFHDHTLMIVFLISSLVLYVISLM) threads the bilayer. Topologically, residues 46–59 (LTTKLTHTNTMDAQ) are mitochondrial matrix. The helical transmembrane segment at 60 to 87 (EVETIWTILPAVILILIALPSLRILYMM) threads the bilayer. At 88–227 (DEINNPVLTV…HFENWSASMI (140 aa)) the chain is on the mitochondrial intermembrane side. 6 residues coordinate Cu cation: His-161, Cys-196, Glu-198, Cys-200, His-204, and Met-207. Glu-198 is a Mg(2+) binding site.

It belongs to the cytochrome c oxidase subunit 2 family. As to quaternary structure, component of the cytochrome c oxidase (complex IV, CIV), a multisubunit enzyme composed of 14 subunits. The complex is composed of a catalytic core of 3 subunits MT-CO1, MT-CO2 and MT-CO3, encoded in the mitochondrial DNA, and 11 supernumerary subunits COX4I, COX5A, COX5B, COX6A, COX6B, COX6C, COX7A, COX7B, COX7C, COX8 and NDUFA4, which are encoded in the nuclear genome. The complex exists as a monomer or a dimer and forms supercomplexes (SCs) in the inner mitochondrial membrane with NADH-ubiquinone oxidoreductase (complex I, CI) and ubiquinol-cytochrome c oxidoreductase (cytochrome b-c1 complex, complex III, CIII), resulting in different assemblies (supercomplex SCI(1)III(2)IV(1) and megacomplex MCI(2)III(2)IV(2)). Found in a complex with TMEM177, COA6, COX18, COX20, SCO1 and SCO2. Interacts with TMEM177 in a COX20-dependent manner. Interacts with COX20. Interacts with COX16. Cu cation is required as a cofactor.

The protein localises to the mitochondrion inner membrane. It carries out the reaction 4 Fe(II)-[cytochrome c] + O2 + 8 H(+)(in) = 4 Fe(III)-[cytochrome c] + 2 H2O + 4 H(+)(out). Component of the cytochrome c oxidase, the last enzyme in the mitochondrial electron transport chain which drives oxidative phosphorylation. The respiratory chain contains 3 multisubunit complexes succinate dehydrogenase (complex II, CII), ubiquinol-cytochrome c oxidoreductase (cytochrome b-c1 complex, complex III, CIII) and cytochrome c oxidase (complex IV, CIV), that cooperate to transfer electrons derived from NADH and succinate to molecular oxygen, creating an electrochemical gradient over the inner membrane that drives transmembrane transport and the ATP synthase. Cytochrome c oxidase is the component of the respiratory chain that catalyzes the reduction of oxygen to water. Electrons originating from reduced cytochrome c in the intermembrane space (IMS) are transferred via the dinuclear copper A center (CU(A)) of subunit 2 and heme A of subunit 1 to the active site in subunit 1, a binuclear center (BNC) formed by heme A3 and copper B (CU(B)). The BNC reduces molecular oxygen to 2 water molecules using 4 electrons from cytochrome c in the IMS and 4 protons from the mitochondrial matrix. In Niviventer culturatus (Oldfield white-bellied rat), this protein is Cytochrome c oxidase subunit 2 (MT-CO2).